We begin with the raw amino-acid sequence, 252 residues long: Trans-aconitate 2-methyltransferase (252 aa).

It belongs to the methyltransferase superfamily. Tam family.

The protein resides in the cytoplasm. The catalysed reaction is trans-aconitate + S-adenosyl-L-methionine = (E)-3-(methoxycarbonyl)pent-2-enedioate + S-adenosyl-L-homocysteine. In terms of biological role, catalyzes the S-adenosylmethionine monomethyl esterification of trans-aconitate. The polypeptide is Trans-aconitate 2-methyltransferase (Escherichia coli (strain UTI89 / UPEC)).